The primary structure comprises 45 residues: GLSAAERQVVASCWKDIAGADXGAGVGKEXLIKFISAAPEMAAVF.

The region spanning 1–45 (GLSAAERQVVASCWKDIAGADXGAGVGKEXLIKFISAAPEMAAVF) is the Globin domain.

This sequence belongs to the globin family. As to quaternary structure, monomer.

The chain is Globin, minor monomeric component from Glycera dibranchiata (Bloodworm).